A 1093-amino-acid chain; its full sequence is Atos homolog protein A (1093 aa).

The transactivation domain 1 (TAD1) stretch occupies residues 29–37; it reads ALLITEGRT. Disordered stretches follow at residues 396-479, 558-579, and 746-788; these read AGRP…GNPL, SSKSKLKTPDTPISPRLDGESK, and HDNF…GSMR. Residues 746 to 763 are compositionally biased toward basic and acidic residues; it reads HDNFKNKNRQDKTKAAHD. Positions 895 to 952 are required for macropage invasion; that stretch reads LLGNFEESVLNFRLDPLGIVEGFTAEVGASGVFCPTHMTLPVEVSFYSVSDDNAPSPY. Positions 979–987 are transactivation domain 2 (TAD2); the sequence is FNPNKTVVK.

This sequence belongs to the ATOS family.

The protein localises to the nucleus. In terms of biological role, transcription regulator that syncronizes transcriptional and translational programs to promote macrophage invasion of tissues. This chain is Atos homolog protein A (ATOSA), found in Gallus gallus (Chicken).